Reading from the N-terminus, the 141-residue chain is uncharacterized protein (141 aa).

The span at 1 to 17 shows a compositional bias: basic and acidic residues; that stretch reads MNKSESENDSEYHKEYS. A disordered region spans residues 1–24; that stretch reads MNKSESENDSEYHKEYSESSDPED. The stretch at 52–115 forms a coiled coil; the sequence is IQNLNNNVKE…QMLFEKMRDM (64 aa).

This is an uncharacterized protein from Acanthamoeba polyphaga (Amoeba).